Here is a 394-residue protein sequence, read N- to C-terminus: Monoterpene synthase FDS-5, chloroplastic (394 aa).

Residues 1 to 65 (MASFISLSSK…NLNSQFMQVY (65 aa)) constitute a chloroplast transit peptide. Residues K100, R103, and Q138 each coordinate isopentenyl diphosphate. Positions 145 and 149 each coordinate Mg(2+). Positions 145–149 (DDMMD) match the DDXXD motif motif. R154 is a dimethylallyl diphosphate binding site. R155 provides a ligand contact to isopentenyl diphosphate. The dimethylallyl diphosphate site is built by K242, Q281, K298, and K307.

This sequence belongs to the FPP/GGPP synthase family. It depends on Mg(2+) as a cofactor. Mn(2+) is required as a cofactor.

It localises to the plastid. Its subcellular location is the chloroplast. The catalysed reaction is isopentenyl diphosphate + dimethylallyl diphosphate = (2E)-geranyl diphosphate + diphosphate. It catalyses the reaction 2 dimethylallyl diphosphate = (R,R)-chrysanthemyl diphosphate + diphosphate. The enzyme catalyses 2 dimethylallyl diphosphate = (R)-lavandulyl diphosphate + diphosphate. Condenses two molecules of dimethylallyl diphosphate (DMAPP) to produce mainly an irregular monoterpene, chrysanthemyl diphosphate (CPP) and lower amounts of a branched monoterpene, lavandulyl diphosphate (LPP). CPP is a precursor of the pyrethrin insecticides. When incubated with isopentenyl diphosphate (IPP) and DMAPP, catalyzes three competing isoprenoid condensation reactions, a chain elongation to give geranyl diphosphate (GPP), a cyclopropanation to give CPP and a branching to give LPP. In Artemisia spiciformis (Spiked big sagebrush), this protein is Monoterpene synthase FDS-5, chloroplastic (FDS-5).